A 155-amino-acid chain; its full sequence is RNA pyrophosphohydrolase (155 aa).

Residues 5–147 form the Nudix hydrolase domain; sequence KYRPNVAAII…KRQVYRQVIA (143 aa). The Nudix box signature appears at 42-63; the sequence is GGIDEGETPLEALHRELLEEIG.

Belongs to the Nudix hydrolase family. RppH subfamily. A divalent metal cation is required as a cofactor.

Its function is as follows. Accelerates the degradation of transcripts by removing pyrophosphate from the 5'-end of triphosphorylated RNA, leading to a more labile monophosphorylated state that can stimulate subsequent ribonuclease cleavage. This chain is RNA pyrophosphohydrolase, found in Helicobacter pylori (strain ATCC 700392 / 26695) (Campylobacter pylori).